A 174-amino-acid chain; its full sequence is 3-hydroxydecanoyl-[acyl-carrier-protein] dehydratase (174 aa).

The active site involves His71.

The protein belongs to the thioester dehydratase family. FabA subfamily. Homodimer.

It localises to the cytoplasm. The catalysed reaction is a (3R)-hydroxyacyl-[ACP] = a (2E)-enoyl-[ACP] + H2O. The enzyme catalyses (3R)-hydroxydecanoyl-[ACP] = (2E)-decenoyl-[ACP] + H2O. It catalyses the reaction (2E)-decenoyl-[ACP] = (3Z)-decenoyl-[ACP]. Its pathway is lipid metabolism; fatty acid biosynthesis. Its function is as follows. Necessary for the introduction of cis unsaturation into fatty acids. Catalyzes the dehydration of (3R)-3-hydroxydecanoyl-ACP to E-(2)-decenoyl-ACP and then its isomerization to Z-(3)-decenoyl-ACP. Can catalyze the dehydratase reaction for beta-hydroxyacyl-ACPs with saturated chain lengths up to 16:0, being most active on intermediate chain length. The protein is 3-hydroxydecanoyl-[acyl-carrier-protein] dehydratase of Nitrobacter winogradskyi (strain ATCC 25391 / DSM 10237 / CIP 104748 / NCIMB 11846 / Nb-255).